The sequence spans 339 residues: Phenylalanine--tRNA ligase alpha subunit (339 aa).

A Mg(2+)-binding site is contributed by glutamate 254.

The protein belongs to the class-II aminoacyl-tRNA synthetase family. Phe-tRNA synthetase alpha subunit type 1 subfamily. In terms of assembly, tetramer of two alpha and two beta subunits. Mg(2+) serves as cofactor.

The protein resides in the cytoplasm. The catalysed reaction is tRNA(Phe) + L-phenylalanine + ATP = L-phenylalanyl-tRNA(Phe) + AMP + diphosphate + H(+). The chain is Phenylalanine--tRNA ligase alpha subunit from Clostridium beijerinckii (strain ATCC 51743 / NCIMB 8052) (Clostridium acetobutylicum).